The following is a 923-amino-acid chain: Cell cycle and apoptosis regulator protein 2 (923 aa).

Positions 1 to 35 (MSQFKRQRINPLPGGRNFSGTASTSLLGPPPGLLT) are disordered. T35 bears the Phosphothreonine mark. Position 112 is an N6-acetyllysine; by KAT8 (K112). Position 123 is an N6-methyllysine (K123). At S124 the chain carries Phosphoserine. Disordered stretches follow at residues 178–218 (LNRF…KKPR), 446–510 (KAAE…PAVI), and 568–643 (VSPP…SEDL). R180 is subject to Omega-N-methylarginine. Residues 188 to 200 (GRLDQGRSDDYDS) show a composition bias toward basic and acidic residues. N6-acetyllysine; by KAT8 is present on K215. Low complexity predominate over residues 446–458 (KAAEAAPPTQEAQ). Position 454 is a phosphothreonine; by ATM, ATR and CK2 (T454). T484 is modified (phosphothreonine). S569 bears the Phosphoserine mark. The segment covering 572-602 (EPEKEEAAKEEATKEEEAIKEEVVKEPKDEA) has biased composition (basic and acidic residues). Residue K591 forms a Glycyl lysine isopeptide (Lys-Gly) (interchain with G-Cter in SUMO2 and SUMO3); alternate linkage. K591 participates in a covalent cross-link: Glycyl lysine isopeptide (Lys-Gly) (interchain with G-Cter in SUMO2); alternate. The interval 610 to 670 (ESEAPLKEDG…EEFAGAKLED (61 aa)) is interaction with MCC. A phosphoserine mark is found at S627, S675, S678, S681, S687, and S808. The interval 704 to 923 (DCLLAFVFFD…VEKEEPAPSN (220 aa)) is interaction with NR1D1. A coiled-coil region spans residues 829-909 (LENKIHTLEL…QLEIQRVVEK (81 aa)). T897 carries the phosphothreonine modification.

In terms of assembly, component of the DBIRD complex. Interacts with ZNF326/ZIRD; the interaction is direct. Interacts (via N-terminus) with SIRT1, which inhibits the deacetylation of substrates. Interacts (via N-terminus) with SUV39H1; this interaction abolishes the interaction with SIRT1. Component of a nuclear receptor-mediated transcription complex composed of at least ZNF335, CCAR2 and EMSY; the complex stimulates the transcription of nuclear receptor target genes such as SOX9 and HOXA1. Within the complex interacts with EMSY and interacts with ZNF335 (via C-terminus). Components of this complex may associate with components of a histone methylation complex to form a complex at least composed of ZNF335, HCFC1, CCAR2, EMSY, MKI67, RBBP5, ASH2L and WDR5. Within this complex, interacts with ASH2L. Interacts with NR1D1. Interacts (via N-terminus) with ESR1 and ESR2. Interacts (via N-terminus) with HDAC3 (via C-terminus). Interacts with HDAC1 and MED2F. Interacts with MCC. Interacts (via N-terminus) with NR1H2 and NR1H3 in a ligand-independent manner. Interacts with CSNK2A1. Interacts (via N-terminus) with p53/TP53. Interacts (via N-terminus) with BRCA1 (via the BRCT domains). Interacts (via N-terminus) with CHEK2 (via protein kinase domain). Interacts with PSEM3. Interacts (via N-terminus) with PSIA3 and SENP1. The sumoylated form shows a preferential interaction with SIRT1 as compared to its unmodified form. Interacts with CECR2; may form part of the CERF-1 and/or CEF-5 ISWI chromatin remodeling complexes in embryonic stem cells. Post-translationally, ATM/ATR-mediated phosphorylation at Thr-454 upon DNA damage promotes binding to SIRT1. Phosphorylation at Thr-454 promotes its sumoylation by switching the binding partner of CCAR2 from SENP1 to PIAS3. Acetylation at Lys-112 and Lys-215 by KAT8 prevents inhibitory binding to SIRT1 and increases its deacetylase activity. In terms of processing, genotoxic stress induces its sumoylation and sumoylation promotes the SIRT1-CCAR2 interaction which in turn inhibits SIRT1-mediated deacetylation of p53/TP53. Sumoylation leads to transcriptional activation of p53/TP53 by sequestering SIRT1 from p53/TP53. Desumoylated by SENP1. In terms of tissue distribution, expressed in gastric carcinoma tissue and the expression gradually increases with the progression of the carcinoma (at protein level). Expressed ubiquitously in normal tissues. Expressed in 84 to 100% of neoplastic breast, lung, and colon tissues.

The protein resides in the nucleus. Its subcellular location is the cytoplasm. The protein localises to the cytoskeleton. It is found in the spindle. Functionally, core component of the DBIRD complex, a multiprotein complex that acts at the interface between core mRNP particles and RNA polymerase II (RNAPII) and integrates transcript elongation with the regulation of alternative splicing: the DBIRD complex affects local transcript elongation rates and alternative splicing of a large set of exons embedded in (A + T)-rich DNA regions. Inhibits SIRT1 deacetylase activity leading to increasing levels of p53/TP53 acetylation and p53-mediated apoptosis. Inhibits SUV39H1 methyltransferase activity. Mediates ligand-dependent transcriptional activation by nuclear hormone receptors. Plays a critical role in maintaining genomic stability and cellular integrity following UV-induced genotoxic stress. Regulates the circadian expression of the core clock components NR1D1 and BMAL1. Enhances the transcriptional repressor activity of NR1D1 through stabilization of NR1D1 protein levels by preventing its ubiquitination and subsequent degradation. Represses the ligand-dependent transcriptional activation function of ESR2. Acts as a regulator of PCK1 expression and gluconeogenesis by a mechanism that involves, at least in part, both NR1D1 and SIRT1. Negatively regulates the deacetylase activity of HDAC3 and can alter its subcellular localization. Positively regulates the beta-catenin pathway (canonical Wnt signaling pathway) and is required for MCC-mediated repression of the beta-catenin pathway. Represses ligand-dependent transcriptional activation function of NR1H2 and NR1H3 and inhibits the interaction of SIRT1 with NR1H3. Plays an important role in tumor suppression through p53/TP53 regulation; stabilizes p53/TP53 by affecting its interaction with ubiquitin ligase MDM2. Represses the transcriptional activator activity of BRCA1. Inhibits SIRT1 in a CHEK2 and PSEM3-dependent manner and inhibits the activity of CHEK2 in vitro. The polypeptide is Cell cycle and apoptosis regulator protein 2 (CCAR2) (Homo sapiens (Human)).